A 218-amino-acid polypeptide reads, in one-letter code: Pyrrolidone-carboxylate peptidase (218 aa).

Active-site residues include E81, C144, and H169.

This sequence belongs to the peptidase C15 family. As to quaternary structure, homotetramer.

Its subcellular location is the cytoplasm. The catalysed reaction is Release of an N-terminal pyroglutamyl group from a polypeptide, the second amino acid generally not being Pro.. Its function is as follows. Removes 5-oxoproline from various penultimate amino acid residues except L-proline. The chain is Pyrrolidone-carboxylate peptidase (pcp) from Deinococcus radiodurans (strain ATCC 13939 / DSM 20539 / JCM 16871 / CCUG 27074 / LMG 4051 / NBRC 15346 / NCIMB 9279 / VKM B-1422 / R1).